Consider the following 417-residue polypeptide: UDP-N-acetylglucosamine 1-carboxyvinyltransferase (417 aa).

Lysine 22–asparagine 23 is a binding site for phosphoenolpyruvate. Arginine 92 is a binding site for UDP-N-acetyl-alpha-D-glucosamine. Cysteine 116 functions as the Proton donor in the catalytic mechanism. 2-(S-cysteinyl)pyruvic acid O-phosphothioketal is present on cysteine 116. Aspartate 304 and isoleucine 326 together coordinate UDP-N-acetyl-alpha-D-glucosamine.

The protein belongs to the EPSP synthase family. MurA subfamily.

Its subcellular location is the cytoplasm. The enzyme catalyses phosphoenolpyruvate + UDP-N-acetyl-alpha-D-glucosamine = UDP-N-acetyl-3-O-(1-carboxyvinyl)-alpha-D-glucosamine + phosphate. Its pathway is cell wall biogenesis; peptidoglycan biosynthesis. In terms of biological role, cell wall formation. Adds enolpyruvyl to UDP-N-acetylglucosamine. In Geobacter metallireducens (strain ATCC 53774 / DSM 7210 / GS-15), this protein is UDP-N-acetylglucosamine 1-carboxyvinyltransferase.